Consider the following 3411-residue polypeptide: MSGRKAQGKTLGVNMVRRGVRSLSNKIKQKTKQIGNRPGPSRGVQGFISFFSFNILTGKKITAHLKRLWKMLDPRQGLAVLRKVKRVVAGLMRGLSSRKRRSHDVLTVQFLILGMLLMAGGVTLVRKNRWLLLNVTSEDLGKTFSVGTGNCTTNILEAKYWCPDSMEYNCPNLSPREEPDDIDCWCYGVENVRVAYGKCDSAGRSRRSRRAIDLPTHENHGLKTRQEKWMTGRMGERQLQKIERWLVRNPFFAVTALAIAYLVGSNMTQRVVIALLVLAVGPAYSAHCIGITDRDFIEGVHGGTWVSATLEQDKCVTVMAPDKPSLDISLETVAIDGPAEARKVCYNAVLTHVKINDKCPSTGEAHLAEENEGDNACKRTYSDRGWGNGCGLFGKGSIVACAKFTCAKSMSLFEVDQTKIQYVIRAQLHVGAKQENWNTDIKTLKFDALSGSQEAEFTGYGKATLECRVQTAVDFGNSYIAEMEKESWIVDRQWAQDLTLPWQSGSGGVWREMHHLVEFEPPHAATIRVLALGNQEGSLKTALTGAMRVTKDTNDNNLYKLHGGHVSCRVKLSALTLKGTSYKMCTDKMSFVKNPTDTDHGTVVMQVKVPKGAPCKIPVIVADDLTAAINKGILVTVNPIASTNDDEVLIEVNPPFGDSYIIVGTGDSRLTYQWHKEGSSIGKLFTQTMKGAERLAVMGDAAWDFSSAGGLFTSIGKGSHTVFGSAFQGLFGGLSWITKVIMGAVLIWVGINTRNMTMSMSMILVGVIMMFLSLGVGADQGCAINFGKRELKCGDGIFIFRDSDDWLNKYSYYPEDPVKLASIVKASFEEGKCGLNSVDSLDHEMWRSRADEINAILEENEVDISVVVQDPKNVYQRGTHPFSRIRDGLQYGWKTWGKNLVFSPGRKNGSFIIDGKSRKECPFSNRVWNSFQIEEFGTGVFTTRVYMDAVFEYTIDCDGSILGAAVNGKKSAHGSPTFWMGSHEVNGTWMIHTLETLDYKECEWPLTHTIGTSVEESDMFMPRSIGGPVSSHNHIPGYKVQTNGPWMQVPLEVKREACPGTSVIIDGNCDGRGKSTRSTTDSGKIIPEWCCRSCTMPPVSFHGNDGCWYPMEIRPRKTHESHLVRSWVTAGEIHAVPFGLVSMMIAMEVVLRKRQGPKQMLVGGMVLLGAMLVGQVTLLDLLKLTMAVGLHFHEMNNGGDAMYMALIAAFSIRPGLLIGFGLRTLWSPRERLVLTLGAAMVEIALGGMMGGLWKYLNAVSLCILTINAVASRKASNTILPLMALLTPVTMAEVRLATMLLCAVVIIGVLHQNSKDTSMQKTIPLVALTLTSYLGLTQPFLGLCAFLATRIFGRRSIPVNEALAAAGLVGVLAGLAFQEMENFLGPIAVGGILMMLVSVAGRVDGLELKKLGEVSWEEEAEISGSSARYDVALSEQGEFKLLSEEKVPWDQVVMTSLALVGAAIHPSALLLVLAGWLFHVKGARRSGDVLWDIPTPKIIEECEHLEDGIYGIFQSTFLGASQRGVGVAQGGVFHTMWHVTRGAFLVRNGKKLIPSWASVKEDLVAYGGSWKLEGRWDGEEEVQLIAAVPGKNVVNVQTKPSLFKVRNGGEIGAVALDYPSGTSGSPIVNRNGEVIGLYGNGILVGDNSFVSAISQTEVKEEGKEELQEIPTMLKKGMTTILDYHPGAGKTRRFLPQILAECARRRLRTLVLAPTRVVLSEMKEAFHGLDVKFHTQAFSAHGSGREVIDAMCHATLTYRMLEPTRIVNWEVIIMDEAHFLDPASIAARGWAAHRARANESATILMTATPPGTSDEFPHSNGEIEDVQTDIPSEPWNTGHDWILADKRPTAWFLPSIRAANVMAASLRKAGKSVVVLNRKTFEKEYPTIKQKKPDFILATDIAEMGANLCVDRVLDCRTAFKPVLVDEGRKVAIKGPLRISASSAAQRRGRIGRNPNRDGDSYYYSEPTSEDNAHHVCWLEASMLLDNMEVRGGMVAPLYGIEGTKTPVSPGEMRLRDDQRRVSRELVRNCDLPVWLSWQVAKAGLKTNDRKWCFDGPKEHEILNDSGETVKCRAPGGAKRPLRPRWCDERVSSDQSALADFIKFAEGRRGAAEILVVLSELPDFLAKKGGEAMDTISVFLHSEEGSRAYRNALSMMPEAMTIVMLFILAGLLTSGMVIFFMSPKGISRMSMAMGTMAGCGYLMFLGGAKPTHISYIMLIFFVLMVVVIPEPGQQRSIQDNQVAYLIIGILTLVSVVAANELGMLERTKEDLFGKKNLIPSSASPWSWPDLDLKPGAAWTVYVGIVTILSPMLHHWIKVEYGNLSLSGIAQSASVLSFMDKGIPFMKMNISVIILLVSGWNSITVMPLLCGIGCAMLHWTLILPGIKAQQSKLPQRRVFHGVAKNPVVDGNPTVDIEEAPEMPALYEKKLALYLLLALSLASVAMCRTPFSLAEGIVLASAALGPLIEGNTSLLWNGPMAVSMTGVMRGNYYAFVGVMYNLWKMETGRRGRANGKTLGEVWKRELNLLDRQQFELYKRTDIVEVDRDTARRHLAEGKVDTGVAVSRGTAKLRWFHERGYVKLEGRVTDLGCGRGGWCYYAAAQKEVSGVKGFTLGREGHEKPMNVRSLGWNIITFKDKTDIHHLEPVKCDTLLCDIGESSSSSVTEGERTMRVLDTVEKWLACGVDNFCVKVLAPYMPDVLEKLELLQRRFGGTVIRNPLSRNSTHEMYYVSGARSNVTFTVNQTSRLLMRRMRRPTGKVTLEADVILPIGTRSVETDKGPLNREAIEERVERIKSEYMTTWFYDNDNPYRTWHYCGSYVTKTSGSAASMVNGVIKILTYPWDRIEEVTRMAMTDTTPFGQQRVFKEKVDTRAKDPPAGTRKIMKVVNRWLFRHLAREKNPRLCTKEEFIAKVRSHAAIGAYLEEQEQWKTANEAVQDPKFWELVDEERRLHQQGRCRTCVYNMMGKREKKLSEFGKAKGSRAIWYMWLGARYLEFEALGFLNEDHWASRENSGGGVEGIGLQYLGYVIRDLAAMDGGGFYADDTAGWDTRITEADLDDEQEILNYMSSHHKKLAQAVMEMTYKNKVVKVLRPTPGGKAYMDVISRRDQRGSGQVVTYALNTITNLKVQLIRMAEAEMVIHHHHVQDCDDSTLVRLEAWLIEHGCDRLNRMAVNGDDCVVRPIDDRFGMALSHLNAMSKVRKDISEWQPSKGWNDWENVPFCSHHFHELQLKDGRRIVVPCREQDELIGRGRVSPGNGWMIKETACLSKAYANMWSLMYFHKRDMRLLSLAVSSAVPTSWVPQGRTTWSIHGKGEWMTTEDMLEVWNRVWITNNPHMQDKTVVKEWRDVPYLTKRQDKLCGSLIGMTNRATWASHIHLVIHRIRTLIGQEKYTDYLTVMDRYSVDADLQPGELI.

Residues 1-104 (MSGRKAQGKT…LSSRKRRSHD (104 aa)) are Cytoplasmic-facing. The interval 38 to 72 (PGPSRGVQGFISFFSFNILTGKKITAHLKRLWKML) is hydrophobic; homodimerization of capsid protein C. A propeptide spans 102–121 (SHDVLTVQFLILGMLLMAGG) (ER anchor for the capsid protein C, removed in mature form by serine protease NS3). The helical transmembrane segment at 105–125 (VLTVQFLILGMLLMAGGVTLV) threads the bilayer. Residues 126–244 (RKNRWLLLNV…GERQLQKIER (119 aa)) lie on the Extracellular side of the membrane. Asn134 and Asn150 each carry an N-linked (GlcNAc...) asparagine; by host glycan. The helical transmembrane segment at 245-265 (WLVRNPFFAVTALAIAYLVGS) threads the bilayer. Over 266–270 (NMTQR) the chain is Cytoplasmic. A helical membrane pass occupies residues 271–285 (VVIALLVLAVGPAYS). At 286–730 (AHCIGITDRD…TVFGSAFQGL (445 aa)) the chain is on the extracellular side. 8 disulfide bridges follow: Cys288/Cys315, Cys345/Cys401, Cys345/Cys406, Cys359/Cys390, Cys377/Cys401, Cys377/Cys406, Cys467/Cys568, and Cys585/Cys615. Residues 383 to 396 (DRGWGNGCGLFGKG) form a fusion peptide region. The helical transmembrane segment at 731 to 751 (FGGLSWITKVIMGAVLIWVGI) threads the bilayer. The Extracellular portion of the chain corresponds to 752 to 757 (NTRNMT). The chain crosses the membrane as a helical span at residues 758–778 (MSMSMILVGVIMMFLSLGVGA). At 779 to 1132 (DQGCAINFGK…LVRSWVTAGE (354 aa)) the chain is on the extracellular side. 6 disulfide bridges follow: Cys782–Cys793, Cys833–Cys921, Cys957–Cys1002, Cys1058–Cys1107, Cys1069–Cys1091, and Cys1090–Cys1094. Residues Asn908 and Asn986 are each glycosylated (N-linked (GlcNAc...) asparagine; by host). Residues 1133–1153 (IHAVPFGLVSMMIAMEVVLRK) form a helical membrane-spanning segment. The Cytoplasmic portion of the chain corresponds to 1154 to 1201 (RQGPKQMLVGGMVLLGAMLVGQVTLLDLLKLTMAVGLHFHEMNNGGDA). A helical transmembrane segment spans residues 1202 to 1222 (MYMALIAAFSIRPGLLIGFGL). Residues 1223-1287 (RTLWSPRERL…ILPLMALLTP (65 aa)) are Lumenal-facing. Residues 1288–1308 (VTMAEVRLATMLLCAVVIIGV) form a helical membrane-spanning segment. Over 1309–1355 (LHQNSKDTSMQKTIPLVALTLTSYLGLTQPFLGLCAFLATRIFGRRS) the chain is Cytoplasmic. Residues 1356–1376 (IPVNEALAAAGLVGVLAGLAF) form a helical membrane-spanning segment. Residues 1377-1378 (QE) are Lumenal-facing. The chain crosses the membrane as a helical span at residues 1379–1399 (MENFLGPIAVGGILMMLVSVA). Over 1400-1456 (GRVDGLELKKLGEVSWEEEAEISGSSARYDVALSEQGEFKLLSEEKVPWDQVVMTSL) the chain is Cytoplasmic. The tract at residues 1407-1446 (LKKLGEVSWEEEAEISGSSARYDVALSEQGEFKLLSEEKV) is interacts with and activates NS3 protease. An intramembrane region (helical) is located at residues 1457 to 1477 (ALVGAAIHPSALLLVLAGWLF). Over 1478-2157 (HVKGARRSGD…RNALSMMPEA (680 aa)) the chain is Cytoplasmic. The region spanning 1485–1665 (SGDVLWDIPT…EVKEEGKEEL (181 aa)) is the Peptidase S7 domain. Catalysis depends on charge relay system; for serine protease NS3 activity residues His1537, Asp1561, and Ser1622. Residues 1669–1825 (PTMLKKGMTT…HSNGEIEDVQ (157 aa)) enclose the Helicase ATP-binding domain. The interval 1673 to 1676 (KKGM) is important for RNA-binding. An ATP-binding site is contributed by 1682–1689 (YHPGAGKT). The DEAH box signature appears at 1773-1776 (DEAH). The 178-residue stretch at 1820–1997 (EIEDVQTDIP…VRGGMVAPLY (178 aa)) folds into the Helicase C-terminal domain. Lys1877 carries the N6-acetyllysine; by host modification. A helical transmembrane segment spans residues 2158 to 2178 (MTIVMLFILAGLLTSGMVIFF). At 2179-2186 (MSPKGISR) the chain is on the lumenal side. An intramembrane region (helical) is located at residues 2187–2207 (MSMAMGTMAGCGYLMFLGGAK). The Lumenal portion of the chain corresponds to 2208-2209 (PT). A helical transmembrane segment spans residues 2210-2230 (HISYIMLIFFVLMVVVIPEPG). Over 2231 to 2241 (QQRSIQDNQVA) the chain is Cytoplasmic. The helical transmembrane segment at 2242-2262 (YLIIGILTLVSVVAANELGML) threads the bilayer. Residues 2263–2293 (ERTKEDLFGKKNLIPSSASPWSWPDLDLKPG) are Lumenal-facing. Residues 2294–2314 (AAWTVYVGIVTILSPMLHHWI) constitute an intramembrane region (helical). Residues 2315–2360 (KVEYGNLSLSGIAQSASVLSFMDKGIPFMKMNISVIILLVSGWNSI) lie on the Lumenal side of the membrane. A helical membrane pass occupies residues 2361–2380 (TVMPLLCGIGCAMLHWTLIL). At 2381–2421 (PGIKAQQSKLPQRRVFHGVAKNPVVDGNPTVDIEEAPEMPA) the chain is on the cytoplasmic side. A helical transmembrane segment spans residues 2422–2442 (LYEKKLALYLLLALSLASVAM). Over 2443–2445 (CRT) the chain is Lumenal. A helical transmembrane segment spans residues 2446–2466 (PFSLAEGIVLASAALGPLIEG). Over 2467-3411 (NTSLLWNGPM…DADLQPGELI (945 aa)) the chain is Cytoplasmic. Residues 2507-2771 (GRANGKTLGE…DVILPIGTRS (265 aa)) form the mRNA cap 0-1 NS5-type MT domain. Ser2562 contributes to the S-adenosyl-L-methionine binding site. Ser2562 bears the Phosphoserine mark. Residue Lys2567 is the For 2'-O-MTase activity of the active site. 6 residues coordinate S-adenosyl-L-methionine: Gly2592, Trp2593, Thr2610, Leu2611, Asp2637, and Ile2638. Asp2652 serves as the catalytic For 2'-O-MTase activity. Ile2653 is a binding site for S-adenosyl-L-methionine. Catalysis depends on for 2'-O-MTase activity residues Lys2688 and Glu2724. Tyr2726 serves as a coordination point for S-adenosyl-L-methionine. Positions 2878–2911 (RKIMKVVNRWLFRHLAREKNPRLCTKEEFIAKVR) match the Nuclear localization signal motif. 4 residues coordinate Zn(2+): Glu2945, His2949, Cys2954, and Cys2957. One can recognise a RdRp catalytic domain in the interval 3035-3187 (GGFYADDTAG…RPIDDRFGMA (153 aa)). Zn(2+) contacts are provided by His3222, Cys3238, and Cys3357.

This sequence in the N-terminal section; belongs to the class I-like SAM-binding methyltransferase superfamily. mRNA cap 0-1 NS5-type methyltransferase family. As to quaternary structure, homodimer. Interacts (via N-terminus) with host EXOC1 (via C-terminus); this interaction results in EXOC1 degradation through the proteasome degradation pathway. In terms of assembly, forms heterodimers with envelope protein E in the endoplasmic reticulum and Golgi. Homodimer; in the endoplasmic reticulum and Golgi. Interacts with protein prM. Interacts with non-structural protein 1. As to quaternary structure, homodimer; Homohexamer when secreted. Interacts with envelope protein E. In terms of assembly, interacts (via N-terminus) with serine protease NS3. Forms a heterodimer with serine protease NS3. May form homooligomers. As to quaternary structure, forms a heterodimer with NS2B. Interacts with non-structural protein 2A (via N-terminus). Interacts with NS4B. Interacts with unphosphorylated RNA-directed RNA polymerase NS5; this interaction stimulates RNA-directed RNA polymerase NS5 guanylyltransferase activity. NS3 interacts with host PDCD6IP; this interaction contributes to virion release. In terms of assembly, interacts with serine protease NS3. Homodimer. Interacts with host STAT2; this interaction prevents the establishment of cellular antiviral state. Interacts with serine protease NS3. Interacts with host TRIM23; this interaction leads to NS5 ubiquitination. Specific enzymatic cleavages in vivo yield mature proteins. The nascent capsid protein C contains a C-terminal hydrophobic domain that act as a signal sequence for translocation of prM into the lumen of the ER. Mature capsid protein C is cleaved at a site upstream of this hydrophobic domain by NS3. prM is cleaved in post-Golgi vesicles by a host furin, releasing the mature small envelope protein M, and peptide pr. Non-structural protein 2A-alpha, a C-terminally truncated form of non-structural protein 2A, results from partial cleavage by NS3. Specific enzymatic cleavages in vivo yield mature proteins peptide 2K acts as a signal sequence and is removed from the N-terminus of NS4B by the host signal peptidase in the ER lumen. Signal cleavage at the 2K-4B site requires a prior NS3 protease-mediated cleavage at the 4A-2K site. In terms of processing, cleaved in post-Golgi vesicles by a host furin, releasing the mature small envelope protein M, and peptide pr. This cleavage is incomplete as up to 30% of viral particles still carry uncleaved prM. Post-translationally, N-glycosylated. N-glycosylated. The excreted form is glycosylated and this is required for efficient secretion of the protein from infected cells. In terms of processing, polyubiquitinated; ubiquitination is probably mediated by host TRIM23 and is prerequisite for NS5-STAT2 interaction. NS5 is not ISGylated or sumoylated. Post-translationally, acetylated by host KAT5. Acetylation modulates NS3 RNA-binding and unwinding activities and plays an important positive role for viral replication. Phosphorylated on serines residues. This phosphorylation may trigger NS5 nuclear localization.

Its subcellular location is the virion. It is found in the host nucleus. The protein localises to the host cytoplasm. It localises to the host perinuclear region. The protein resides in the secreted. Its subcellular location is the virion membrane. It is found in the host endoplasmic reticulum membrane. It catalyses the reaction Selective hydrolysis of -Xaa-Xaa-|-Yaa- bonds in which each of the Xaa can be either Arg or Lys and Yaa can be either Ser or Ala.. The catalysed reaction is RNA(n) + a ribonucleoside 5'-triphosphate = RNA(n+1) + diphosphate. The enzyme catalyses a ribonucleoside 5'-triphosphate + H2O = a ribonucleoside 5'-diphosphate + phosphate + H(+). It carries out the reaction ATP + H2O = ADP + phosphate + H(+). It catalyses the reaction a 5'-end (5'-triphosphoguanosine)-ribonucleoside in mRNA + S-adenosyl-L-methionine = a 5'-end (N(7)-methyl 5'-triphosphoguanosine)-ribonucleoside in mRNA + S-adenosyl-L-homocysteine. The catalysed reaction is a 5'-end (N(7)-methyl 5'-triphosphoguanosine)-ribonucleoside in mRNA + S-adenosyl-L-methionine = a 5'-end (N(7)-methyl 5'-triphosphoguanosine)-(2'-O-methyl-ribonucleoside) in mRNA + S-adenosyl-L-homocysteine + H(+). In terms of biological role, plays a role in virus budding by binding to the cell membrane and gathering the viral RNA into a nucleocapsid that forms the core of a mature virus particle. During virus entry, may induce genome penetration into the host cytoplasm after hemifusion induced by the surface proteins. Can migrate to the cell nucleus where it modulates host functions. Inhibits RNA silencing by interfering with host Dicer. Its function is as follows. Prevents premature fusion activity of envelope proteins in trans-Golgi by binding to envelope protein E at pH6.0. After virion release in extracellular space, gets dissociated from E dimers. Functionally, acts as a chaperone for envelope protein E during intracellular virion assembly by masking and inactivating envelope protein E fusion peptide. prM is the only viral peptide matured by host furin in the trans-Golgi network probably to avoid catastrophic activation of the viral fusion activity in acidic Golgi compartment prior to virion release. prM-E cleavage is inefficient, and many virions are only partially matured. These uncleaved prM would play a role in immune evasion. In terms of biological role, may play a role in virus budding. Exerts cytotoxic effects by activating a mitochondrial apoptotic pathway through M ectodomain. May display a viroporin activity. Binds to host cell surface receptor and mediates fusion between viral and cellular membranes. Envelope protein is synthesized in the endoplasmic reticulum in the form of heterodimer with protein prM. They play a role in virion budding in the ER, and the newly formed immature particle is covered with 60 spikes composed of heterodimer between precursor prM and envelope protein E. The virion is transported to the Golgi apparatus where the low pH causes dissociation of PrM-E heterodimers and formation of E homodimers. prM-E cleavage is inefficient, and many virions are only partially matured. These uncleaved prM would play a role in immune evasion. Its function is as follows. Involved in immune evasion, pathogenesis and viral replication. Once cleaved off the polyprotein, is targeted to three destinations: the viral replication cycle, the plasma membrane and the extracellular compartment. Essential for viral replication. Required for formation of the replication complex and recruitment of other non-structural proteins to the ER-derived membrane structures. Excreted as a hexameric lipoparticle that plays a role against host immune response. Antagonizing the complement function. Binds to the host macrophages and dendritic cells. Inhibits signal transduction originating from Toll-like receptor 3 (TLR3). Functionally, component of the viral RNA replication complex that functions in virion assembly and antagonizes the host immune response. In terms of biological role, required cofactor for the serine protease function of NS3. May have membrane-destabilizing activity and form viroporins. Displays three enzymatic activities: serine protease, NTPase and RNA helicase. NS3 serine protease, in association with NS2B, performs its autocleavage and cleaves the polyprotein at dibasic sites in the cytoplasm: C-prM, NS2A-NS2B, NS2B-NS3, NS3-NS4A, NS4A-2K and NS4B-NS5. NS3 RNA helicase binds RNA and unwinds dsRNA in the 3' to 5' direction. Also plays a role in virus assembly. Its function is as follows. Regulates the ATPase activity of the NS3 helicase activity. NS4A allows NS3 helicase to conserve energy during unwinding. Functionally, functions as a signal peptide for NS4B and is required for the interferon antagonism activity of the latter. In terms of biological role, induces the formation of ER-derived membrane vesicles where the viral replication takes place. Inhibits interferon (IFN)-induced host STAT1 phosphorylation and nuclear translocation, thereby preventing the establishment of cellular antiviral state by blocking the IFN-alpha/beta pathway. Replicates the viral (+) and (-) RNA genome, and performs the capping of genomes in the cytoplasm. NS5 methylates viral RNA cap at guanine N-7 and ribose 2'-O positions. Besides its role in RNA genome replication, also prevents the establishment of cellular antiviral state by blocking the interferon-alpha/beta (IFN-alpha/beta) signaling pathway. IFN-I induces binding of NS5 to host IFN-activated transcription factor STAT2, preventing its transcriptional activity. Host TRIM23 is the E3 ligase that interacts with and polyubiquitinates NS5 to promote its binding to STAT2 and trigger IFN-I signaling inhibition. The polypeptide is Genome polyprotein (Yellow fever virus (isolate Ivory Coast/85-82H/1982) (YFV)).